A 431-amino-acid polypeptide reads, in one-letter code: Cleavage stimulation factor subunit 1 (431 aa).

WD repeat units follow at residues 106 to 145 (SHKG…AKSA), 171 to 210 (DHVD…AKRA), 215 to 254 (QEAE…CFVS), 260 to 301 (QHTD…TTFE), 303 to 343 (AHDG…TLVR), and 395 to 431 (GHNN…STTD).

Homodimer. The CSTF complex is composed of CSTF1 (50 kDa subunit), CSTF2 (64 kDa subunit) and CSTF3 (77 kDa subunit). Interacts (via repeats WD) directly with CSTF3. Interacts (via repeat WD6) with BARD1. Interacts with ERCC6.

The protein localises to the nucleus. In terms of biological role, one of the multiple factors required for polyadenylation and 3'-end cleavage of mammalian pre-mRNAs. May be responsible for the interaction of CSTF with other factors to form a stable complex on the pre-mRNA. The protein is Cleavage stimulation factor subunit 1 (Cstf1) of Mus musculus (Mouse).